The following is a 131-amino-acid chain: Profilin-6 (131 aa).

The protein belongs to the profilin family. Occurs in many kinds of cells as a complex with monomeric actin in a 1:1 ratio.

The protein localises to the cytoplasm. The protein resides in the cytoskeleton. Binds to actin and affects the structure of the cytoskeleton. At high concentrations, profilin prevents the polymerization of actin, whereas it enhances it at low concentrations. By binding to PIP2, it inhibits the formation of IP3 and DG. This Hevea brasiliensis (Para rubber tree) protein is Profilin-6.